A 201-amino-acid polypeptide reads, in one-letter code: Transgelin (201 aa).

At alanine 2 the chain carries N-acetylalanine. The 114-residue stretch at 24-137 (EELEERLVEW…RTVMALGSLA (114 aa)) folds into the Calponin-homology (CH) domain. Residues 154-161 (KKAQEHKR) are could be involved in actin-binding. A Phosphoserine modification is found at serine 166. N6-acetyllysine is present on lysine 172. One copy of the Calponin-like repeat lies at 175–200 (IGLQMGSNRGASQAGMTGYGRPRQII). Serine 181 bears the Phosphoserine mark. The residue at position 183 (arginine 183) is an Omega-N-methylarginine.

Belongs to the calponin family. Smooth muscle and mesenchymal cells but not in skeletal muscle or lymphocytes.

Its subcellular location is the cytoplasm. Functionally, actin cross-linking/gelling protein. The protein is Transgelin (Tagln) of Rattus norvegicus (Rat).